The primary structure comprises 414 residues: Serine/threonine transporter SstT (414 aa).

A run of 8 helical transmembrane segments spans residues 16 to 36 (GSLV…AWIS), 46 to 66 (LGTL…LMLV), 84 to 104 (ILFL…VFSF), 143 to 163 (ALLN…GFAL), 180 to 200 (AVTF…FGLV), 219 to 239 (LVVL…LLVF), 300 to 320 (MAGA…TLGV), and 332 to 352 (VVAS…LLLI).

This sequence belongs to the dicarboxylate/amino acid:cation symporter (DAACS) (TC 2.A.23) family.

It localises to the cell inner membrane. The catalysed reaction is L-serine(in) + Na(+)(in) = L-serine(out) + Na(+)(out). The enzyme catalyses L-threonine(in) + Na(+)(in) = L-threonine(out) + Na(+)(out). Functionally, involved in the import of serine and threonine into the cell, with the concomitant import of sodium (symport system). The chain is Serine/threonine transporter SstT from Salmonella schwarzengrund (strain CVM19633).